Here is a 783-residue protein sequence, read N- to C-terminus: Flavin carrier protein 2 (783 aa).

The first 22 residues, 1–22 (MIFLNTFARCLLTCFVLCSGTA), serve as a signal peptide directing secretion. At 23 to 182 (RSSDTNDTTP…NGKTVQTKYA (160 aa)) the chain is on the lumenal side. N-linked (GlcNAc...) asparagine glycans are attached at residues N28, N65, N81, and N156. The helical transmembrane segment at 183–203 (AWPIAAISGVGVLTSGFVSVI) threads the bilayer. The Cytoplasmic segment spans residues 204–211 (GYSATAAH). A helical transmembrane segment spans residues 212–232 (IASNSISLFIYFQNLAITAMM). Topologically, residues 233–347 (GVSRVPPIAA…AYLANIELSN (115 aa)) are lumenal. N323 is a glycosylation site (N-linked (GlcNAc...) asparagine). Residues 348–368 (FFLTGIVFFLFFLFVVVVSLI) traverse the membrane as a helical segment. The Cytoplasmic segment spans residues 369-402 (FFKALLEVLTRARILKETSNFFQYRKNWGSIIKG). Residues 403 to 423 (TLFRLSIIAFPQVSLLAIWEF) form a helical membrane-spanning segment. Residues 424 to 430 (TQVNSPA) are Lumenal-facing. Residues 431-451 (IVVDAVVILLIITGLLVYGTI) traverse the membrane as a helical segment. The Cytoplasmic segment spans residues 452–492 (RVFIKGRESLRLYKNPAYLLYSDTYFLNKFGFLYVQFKADK). The chain crosses the membrane as a helical span at residues 493–513 (FWWLLPLLSYAFLRSLFVAVL). The Lumenal portion of the chain corresponds to 514–521 (QNQGKAQA). A helical transmembrane segment spans residues 522–542 (MIIFVIELAYFVCLCWIRPYL). Residues 543 to 547 (DKRTN) lie on the Cytoplasmic side of the membrane. A helical membrane pass occupies residues 548–568 (VFNIAIHLVNLINAFFFLFFS). Over 569–581 (NLFKQPAVVSSVM) the chain is Lumenal. Residues 582 to 602 (AVILFVLNAVFALFLLLFTIV) traverse the membrane as a helical segment. Residues 603-783 (TCTLALLHRN…ENARNNNPYL (181 aa)) are Cytoplasmic-facing. The interval 681–783 (RLFDDETSSS…ENARNNNPYL (103 aa)) is disordered. A compositionally biased stretch (low complexity) spans 688–697 (SSSSFKQNSS). Composition is skewed to polar residues over residues 704–748 (VTEQ…TSSL) and 756–767 (YLGNSNKSYSHF). Positions 768 to 783 (NNNGSNENARNNNPYL) are enriched in low complexity.

This sequence belongs to the transient receptor potential (TRP) ion channel family.

The protein resides in the endoplasmic reticulum membrane. In terms of biological role, may be responsible for the transport of FAD into the endoplasmic reticulum lumen, where it is required for oxidative protein folding. The protein is Flavin carrier protein 2 (FLC2) of Saccharomyces cerevisiae (strain ATCC 204508 / S288c) (Baker's yeast).